Consider the following 80-residue polypeptide: Cell division activator CedA (80 aa).

It belongs to the CedA family.

Functionally, activates the cell division inhibited by chromosomal DNA over-replication. The sequence is that of Cell division activator CedA from Escherichia coli O139:H28 (strain E24377A / ETEC).